The sequence spans 282 residues: 40S small subunit processome assembly factor 1 (282 aa).

2 disordered regions span residues 27 to 98 (YDLG…SEVP) and 121 to 143 (FHSR…NKTK). Positions 48-59 (KRDSETVADRAA) are enriched in basic and acidic residues. Residues S67 and S75 each carry the phosphoserine modification. Low complexity predominate over residues 89 to 98 (SAPAAPSEVP). Positions 131–143 (KSEEDKPAKNKTK) are enriched in basic and acidic residues. K173 is modified (N6-acetyllysine). Over residues 208–226 (EKRTSMEEEKRAAQETDIF) the composition is skewed to basic and acidic residues. The segment at 208 to 254 (EKRTSMEEEKRAAQETDIFKRKKRKGRSQEDRRSKKLAPSILSSGRA) is disordered. A Phosphoserine modification is found at S268.

As to quaternary structure, part of the small subunit (SSU) processome, composed of more than 70 proteins and the RNA chaperone small nucleolar RNA (snoRNA) U3.

The protein resides in the chromosome. It localises to the nucleus. The protein localises to the nucleolus. Part of the small subunit (SSU) processome, first precursor of the small eukaryotic ribosomal subunit. During the assembly of the SSU processome in the nucleolus, many ribosome biogenesis factors, an RNA chaperone and ribosomal proteins associate with the nascent pre-rRNA and work in concert to generate RNA folding, modifications, rearrangements and cleavage as well as targeted degradation of pre-ribosomal RNA by the RNA exosome. Prevents helicase DHX37 to be recruited before post-A1 state. The sequence is that of 40S small subunit processome assembly factor 1 from Rattus norvegicus (Rat).